Consider the following 300-residue polypeptide: Ubiquinone biosynthesis protein COQ4, mitochondrial (300 aa).

4 residues coordinate Zn(2+): histidine 173, aspartate 174, histidine 177, and glutamate 189.

This sequence belongs to the COQ4 family. Component of a multi-subunit COQ enzyme complex, composed of at least COQ3, COQ4, COQ5, COQ6, COQ7 and COQ9. It depends on Zn(2+) as a cofactor.

It localises to the mitochondrion inner membrane. The enzyme catalyses a 4-hydroxy-3-methoxy-5-(all-trans-polyprenyl)benzoate + H(+) = a 2-methoxy-6-(all-trans-polyprenyl)phenol + CO2. Its pathway is cofactor biosynthesis; ubiquinone biosynthesis. Functionally, lyase that catalyzes the C1-decarboxylation of 4-hydroxy-3-methoxy-5-(all-trans-polyprenyl)benzoic acid into 2-methoxy-6-(all-trans-polyprenyl)phenol during ubiquinone biosynthesis. The polypeptide is Ubiquinone biosynthesis protein COQ4, mitochondrial (Cryptococcus neoformans var. neoformans serotype D (strain JEC21 / ATCC MYA-565) (Filobasidiella neoformans)).